Reading from the N-terminus, the 459-residue chain is Argininosuccinate lyase (459 aa).

It belongs to the lyase 1 family. Argininosuccinate lyase subfamily.

Its subcellular location is the cytoplasm. The enzyme catalyses 2-(N(omega)-L-arginino)succinate = fumarate + L-arginine. It participates in amino-acid biosynthesis; L-arginine biosynthesis; L-arginine from L-ornithine and carbamoyl phosphate: step 3/3. This chain is Argininosuccinate lyase, found in Methylobacterium radiotolerans (strain ATCC 27329 / DSM 1819 / JCM 2831 / NBRC 15690 / NCIMB 10815 / 0-1).